A 95-amino-acid chain; its full sequence is Aspartyl/glutamyl-tRNA(Asn/Gln) amidotransferase subunit C (95 aa).

This sequence belongs to the GatC family. As to quaternary structure, heterotrimer of A, B and C subunits.

The enzyme catalyses L-glutamyl-tRNA(Gln) + L-glutamine + ATP + H2O = L-glutaminyl-tRNA(Gln) + L-glutamate + ADP + phosphate + H(+). It catalyses the reaction L-aspartyl-tRNA(Asn) + L-glutamine + ATP + H2O = L-asparaginyl-tRNA(Asn) + L-glutamate + ADP + phosphate + 2 H(+). Allows the formation of correctly charged Asn-tRNA(Asn) or Gln-tRNA(Gln) through the transamidation of misacylated Asp-tRNA(Asn) or Glu-tRNA(Gln) in organisms which lack either or both of asparaginyl-tRNA or glutaminyl-tRNA synthetases. The reaction takes place in the presence of glutamine and ATP through an activated phospho-Asp-tRNA(Asn) or phospho-Glu-tRNA(Gln). The protein is Aspartyl/glutamyl-tRNA(Asn/Gln) amidotransferase subunit C of Ruegeria pomeroyi (strain ATCC 700808 / DSM 15171 / DSS-3) (Silicibacter pomeroyi).